The primary structure comprises 97 residues: Co-chaperonin GroES (97 aa).

The protein belongs to the GroES chaperonin family. Heptamer of 7 subunits arranged in a ring. Interacts with the chaperonin GroEL.

The protein localises to the cytoplasm. Its function is as follows. Together with the chaperonin GroEL, plays an essential role in assisting protein folding. The GroEL-GroES system forms a nano-cage that allows encapsulation of the non-native substrate proteins and provides a physical environment optimized to promote and accelerate protein folding. GroES binds to the apical surface of the GroEL ring, thereby capping the opening of the GroEL channel. This Pseudomonas putida (strain W619) protein is Co-chaperonin GroES.